The primary structure comprises 45 residues: Large ribosomal subunit protein bL34 (45 aa).

Belongs to the bacterial ribosomal protein bL34 family.

The polypeptide is Large ribosomal subunit protein bL34 (Kocuria rhizophila (strain ATCC 9341 / DSM 348 / NBRC 103217 / DC2201)).